A 224-amino-acid chain; its full sequence is LexA repressor (224 aa).

The H-T-H motif DNA-binding region spans 31-51 (RAEIAAEFGFKSANAAEEHLQ). Active-site for autocatalytic cleavage activity residues include Ser142 and Lys179.

This sequence belongs to the peptidase S24 family. In terms of assembly, homodimer.

The enzyme catalyses Hydrolysis of Ala-|-Gly bond in repressor LexA.. In terms of biological role, represses a number of genes involved in the response to DNA damage (SOS response), including recA and lexA. In the presence of single-stranded DNA, RecA interacts with LexA causing an autocatalytic cleavage which disrupts the DNA-binding part of LexA, leading to derepression of the SOS regulon and eventually DNA repair. This Paracidovorax citrulli (strain AAC00-1) (Acidovorax citrulli) protein is LexA repressor.